We begin with the raw amino-acid sequence, 353 residues long: Photosystem II D2 protein (353 aa).

At threonine 2 the chain carries N-acetylthreonine. Threonine 2 bears the Phosphothreonine mark. The helical transmembrane segment at 41 to 61 threads the bilayer; the sequence is CAYFALGGWFTGTTFVTSWYT. Position 118 (histidine 118) interacts with chlorophyll a. The chain crosses the membrane as a helical span at residues 125–141; it reads GFMLRQFELARPVQLRP. Residues glutamine 130 and asparagine 143 each coordinate pheophytin a. A helical membrane pass occupies residues 153–166; that stretch reads VFLSVFLIYPLGQS. A chlorophyll a-binding site is contributed by histidine 198. The helical transmembrane segment at 208–228 threads the bilayer; the sequence is AVLLCAIHGATVENTLFEDGD. Positions 215 and 262 each coordinate a plastoquinone. Histidine 215 is a binding site for Fe cation. Position 269 (histidine 269) interacts with Fe cation. Residues 279-295 traverse the membrane as a helical segment; the sequence is GLWMSAIGVVGLALNLR.

It belongs to the reaction center PufL/M/PsbA/D family. As to quaternary structure, PSII is composed of 1 copy each of membrane proteins PsbA, PsbB, PsbC, PsbD, PsbE, PsbF, PsbH, PsbI, PsbJ, PsbK, PsbL, PsbM, PsbT, PsbX, PsbY, PsbZ, Psb30/Ycf12, at least 3 peripheral proteins of the oxygen-evolving complex and a large number of cofactors. It forms dimeric complexes. The D1/D2 heterodimer binds P680, chlorophylls that are the primary electron donor of PSII, and subsequent electron acceptors. It shares a non-heme iron and each subunit binds pheophytin, quinone, additional chlorophylls, carotenoids and lipids. There is also a Cl(-1) ion associated with D1 and D2, which is required for oxygen evolution. The PSII complex binds additional chlorophylls, carotenoids and specific lipids. serves as cofactor. Only phosphorylated in mesophyll cells, phosphorylation increases when cells are grown under high rather than low light regimes (70 vs 900 umol photons/m-2/s).

The protein localises to the plastid. It is found in the chloroplast thylakoid membrane. The enzyme catalyses 2 a plastoquinone + 4 hnu + 2 H2O = 2 a plastoquinol + O2. In terms of biological role, photosystem II (PSII) is a light-driven water:plastoquinone oxidoreductase that uses light energy to abstract electrons from H(2)O, generating O(2) and a proton gradient subsequently used for ATP formation. It consists of a core antenna complex that captures photons, and an electron transfer chain that converts photonic excitation into a charge separation. The D1/D2 (PsbA/PsbD) reaction center heterodimer binds P680, the primary electron donor of PSII as well as several subsequent electron acceptors. D2 is needed for assembly of a stable PSII complex. The chain is Photosystem II D2 protein from Zea mays (Maize).